The following is a 449-amino-acid chain: Glucose-6-phosphate isomerase (449 aa).

Glutamate 291 functions as the Proton donor in the catalytic mechanism. Catalysis depends on residues histidine 312 and lysine 426.

Belongs to the GPI family.

The protein localises to the cytoplasm. It catalyses the reaction alpha-D-glucose 6-phosphate = beta-D-fructose 6-phosphate. The protein operates within carbohydrate biosynthesis; gluconeogenesis. It participates in carbohydrate degradation; glycolysis; D-glyceraldehyde 3-phosphate and glycerone phosphate from D-glucose: step 2/4. Its function is as follows. Catalyzes the reversible isomerization of glucose-6-phosphate to fructose-6-phosphate. This chain is Glucose-6-phosphate isomerase, found in Streptococcus pyogenes serotype M49 (strain NZ131).